We begin with the raw amino-acid sequence, 603 residues long: Thread biopolymer filament subunit gamma (603 aa).

The head stretch occupies residues 1-191 (MASHSSVSYR…ENETMEEELK (191 aa)). The IF rod domain occupies 158-476 (VKNILGTLNQ…KLLEGQELMV (319 aa)). A coil 1A region spans residues 193–227 (LTGGVPMSPDSTVNLENVETQVTEMLTEVSNLTLE). The segment at 228–240 (RVRLEIDVDHLRA) is linker 1. Positions 241–341 (TADEIKSKYE…DALNVMREEY (101 aa)) are coil 1B. The linker 12 stretch occupies residues 342 to 362 (QQVVTKNVQEAETYCKMQIDQ). The segment at 363–381 (IQGISTQTTEQISILDKEI) is coil 2A. The interval 382-389 (NTLEKELQ) is linker 2. The segment at 390-510 (PLNVEYQRLL…SSVGYGASST (121 aa)) is coil 2B. A tail region spans residues 511 to 603 (TLGAISGGYS…GHDSTIILQQ (93 aa)). The segment covering 562–587 (SSSGGHSMYSSSSMKRSSSKSASASA) has biased composition (low complexity). The interval 562 to 603 (SSSGGHSMYSSSSMKRSSSKSASASAGGYGTSGHDSTIILQQ) is disordered.

It belongs to the intermediate filament family. Coiled-coil heterodimer of an alpha and a gamma subunit. Assemble into 10 nm filaments. Forms a massive, conical, intermediate filament biopolymer of approximately 60 cm.

The protein resides in the secreted. Its subcellular location is the extracellular space. In terms of biological role, released extracellularly into seawater and provides physical and biological defense against invasive organism by modulation of the viscoelastic properties of mucus. This is Thread biopolymer filament subunit gamma from Eptatretus stoutii (Pacific hagfish).